Here is a 374-residue protein sequence, read N- to C-terminus: tRNA-specific 2-thiouridylase MnmA (374 aa).

ATP contacts are provided by residues 13-20 (GMSGGVDS) and methionine 39. Residues 99-101 (NPD) are interaction with target base in tRNA. Cysteine 104 serves as the catalytic Nucleophile. The cysteines at positions 104 and 201 are disulfide-linked. Glycine 128 serves as a coordination point for ATP. The interval 151 to 153 (KDQ) is interaction with tRNA. Cysteine 201 serves as the catalytic Cysteine persulfide intermediate. The tract at residues 313–314 (RY) is interaction with tRNA.

It belongs to the MnmA/TRMU family.

The protein localises to the cytoplasm. The catalysed reaction is S-sulfanyl-L-cysteinyl-[protein] + uridine(34) in tRNA + AH2 + ATP = 2-thiouridine(34) in tRNA + L-cysteinyl-[protein] + A + AMP + diphosphate + H(+). Functionally, catalyzes the 2-thiolation of uridine at the wobble position (U34) of tRNA, leading to the formation of s(2)U34. In Streptococcus equi subsp. zooepidemicus (strain H70), this protein is tRNA-specific 2-thiouridylase MnmA.